The sequence spans 158 residues: NKG2-F type II integral membrane protein (158 aa).

Over residues 1-12 the composition is skewed to polar residues; it reads MNKQRGTYSEVS. The segment at 1-30 is disordered; that stretch reads MNKQRGTYSEVSLAQDPKRQQRKLKGNKSS. At 1 to 74 the chain is on the cytoplasmic side; that stretch reads MNKQRGTYSE…LPPPERLTAE (74 aa). A helical membrane pass occupies residues 75–95; sequence VLGIICIVLMATVLKTIVLIP. Topologically, residues 96–158 are extracellular; the sequence is CIGVLEQNNF…VLQRTLICFL (63 aa).

In terms of assembly, can form disulfide-bonded heterodimer with CD94. As to expression, natural killer cells.

It is found in the membrane. May play a role as a receptor for the recognition of MHC class I HLA-E molecules by NK cells. The chain is NKG2-F type II integral membrane protein (KLRC4) from Pan troglodytes (Chimpanzee).